The primary structure comprises 397 residues: Phosphoglycerate kinase (397 aa).

Residues 21 to 23, R36, 59 to 62, R118, and R151 contribute to the substrate site; these read DFN and HLGR. ATP contacts are provided by residues K202, G293, E324, and 353 to 356; that span reads GGDS.

The protein belongs to the phosphoglycerate kinase family. Monomer.

It localises to the cytoplasm. The enzyme catalyses (2R)-3-phosphoglycerate + ATP = (2R)-3-phospho-glyceroyl phosphate + ADP. The protein operates within carbohydrate degradation; glycolysis; pyruvate from D-glyceraldehyde 3-phosphate: step 2/5. The polypeptide is Phosphoglycerate kinase (Chloroherpeton thalassium (strain ATCC 35110 / GB-78)).